A 244-amino-acid polypeptide reads, in one-letter code: NAD(P)H-quinone oxidoreductase subunit K (244 aa).

The [4Fe-4S] cluster site is built by C51, C52, C116, and C147.

This sequence belongs to the complex I 20 kDa subunit family. As to quaternary structure, NDH-1 can be composed of about 15 different subunits; different subcomplexes with different compositions have been identified which probably have different functions. The cofactor is [4Fe-4S] cluster.

It localises to the cellular thylakoid membrane. The enzyme catalyses a plastoquinone + NADH + (n+1) H(+)(in) = a plastoquinol + NAD(+) + n H(+)(out). It catalyses the reaction a plastoquinone + NADPH + (n+1) H(+)(in) = a plastoquinol + NADP(+) + n H(+)(out). Its function is as follows. NDH-1 shuttles electrons from an unknown electron donor, via FMN and iron-sulfur (Fe-S) centers, to quinones in the respiratory and/or the photosynthetic chain. The immediate electron acceptor for the enzyme in this species is believed to be plastoquinone. Couples the redox reaction to proton translocation, and thus conserves the redox energy in a proton gradient. Cyanobacterial NDH-1 also plays a role in inorganic carbon-concentration. In Synechococcus sp. (strain JA-3-3Ab) (Cyanobacteria bacterium Yellowstone A-Prime), this protein is NAD(P)H-quinone oxidoreductase subunit K.